The primary structure comprises 236 residues: 3-oxoacyl-[acyl-carrier-protein] reductase (236 aa).

An N-acetylmethionine modification is found at M1. NADP(+) is bound by residues 11–14 (SRGI) and 34–35 (RN). An N6-acetyllysine modification is found at K40. Position 83–85 (83–85 (AAG)) interacts with NADP(+). Position 96 is an N6-acetyllysine (K96). Residue S134 participates in substrate binding. Residues Y147, K151, and 180–182 (IHT) contribute to the NADP(+) site. The Proton acceptor role is filled by Y147. An N6-acetyllysine modification is found at K194.

The protein belongs to the short-chain dehydrogenases/reductases (SDR) family. As to quaternary structure, homotetramer (in vitro). Heterotetramer with HSD17B8; contains two molecules each of HSD17B8 and CBR4. Does not form homotetramers when HSD17B8 is coexpressed, only heterotetramers (in vitro).

The protein localises to the mitochondrion matrix. It carries out the reaction a (3R)-hydroxyacyl-[ACP] + NADP(+) = a 3-oxoacyl-[ACP] + NADPH + H(+). The enzyme catalyses a quinone + NADPH + H(+) = a quinol + NADP(+). It functions in the pathway lipid metabolism; fatty acid biosynthesis. In terms of biological role, component of the heterotetramer complex KAR (3-ketoacyl-[acyl carrier protein] reductase or 3-ketoacyl-[ACP] reductase) that forms part of the mitochondrial fatty acid synthase (mtFAS). Beta-subunit of the KAR heterotetramer complex, responsible for the 3-ketoacyl-ACP reductase activity of the mtFAS, reduces 3-oxoacyl-[ACP] to (3R)-hydroxyacyl-[ACP] in a NADPH-dependent manner with no chain length preference, thereby participating in mitochondrial fatty acid biosynthesis. The homotetramer has NADPH-dependent quinone reductase activity (in vitro), hence could play a role in protection against cytotoxicity of exogenous quinones. As a heterotetramer, it can also reduce 9,10-phenanthrenequinone, 1,4-benzoquinone and various other o-quinones and p-quinones (in vitro). This is 3-oxoacyl-[acyl-carrier-protein] reductase (Cbr4) from Rattus norvegicus (Rat).